We begin with the raw amino-acid sequence, 145 residues long: Large ribosomal subunit protein uL16 (145 aa).

The protein belongs to the universal ribosomal protein uL16 family. Part of the 50S ribosomal subunit.

Functionally, binds 23S rRNA and is also seen to make contacts with the A and possibly P site tRNAs. This is Large ribosomal subunit protein uL16 from Agathobacter rectalis (strain ATCC 33656 / DSM 3377 / JCM 17463 / KCTC 5835 / VPI 0990) (Eubacterium rectale).